We begin with the raw amino-acid sequence, 805 residues long: Centrosomal protein of 85 kDa-like (805 aa).

2 disordered regions span residues 1 to 27 and 50 to 89; these read MWGR…AGPD and RNNH…LSFK. Residue serine 15 is modified to Phosphoserine. Residues 60–74 are compositionally biased toward polar residues; sequence ASDSGDTGIGTSCSD. Serine 207 carries the phosphoserine modification. The stretch at 439–682 forms a coiled coil; it reads SQQGEFEQKL…LENQRQTDET (244 aa).

Belongs to the CEP85 family. In terms of tissue distribution, isoform 1 and isoform 4 are expressed in spleen, lymph, thymus, tonsil and peripheral blood leukocytes, with isoform 1 expressed at higher levels. Isoform 4 is detected in K-562 leukemia cells and in the blood of precursor T lymphoblastic lymphoma (T-ALL) patients.

The protein localises to the cytoplasm. The protein resides in the cytoskeleton. It localises to the microtubule organizing center. It is found in the centrosome. Plays an essential role in neuronal cell migration. The sequence is that of Centrosomal protein of 85 kDa-like from Homo sapiens (Human).